The sequence spans 346 residues: UDP-N-acetylenolpyruvoylglucosamine reductase (346 aa).

One can recognise an FAD-binding PCMH-type domain in the interval 18–189 (LRAQARAFIA…VSVVFALKTH (172 aa)). Arg165 is an active-site residue. The Proton donor role is filled by Ser240. Glu336 is an active-site residue.

This sequence belongs to the MurB family. FAD serves as cofactor.

It is found in the cytoplasm. It carries out the reaction UDP-N-acetyl-alpha-D-muramate + NADP(+) = UDP-N-acetyl-3-O-(1-carboxyvinyl)-alpha-D-glucosamine + NADPH + H(+). It functions in the pathway cell wall biogenesis; peptidoglycan biosynthesis. In terms of biological role, cell wall formation. In Neisseria meningitidis serogroup A / serotype 4A (strain DSM 15465 / Z2491), this protein is UDP-N-acetylenolpyruvoylglucosamine reductase.